The following is a 126-amino-acid chain: uncharacterized protein (126 aa).

Belongs to the SufE family.

This is an uncharacterized protein from Haemophilus influenzae (strain ATCC 51907 / DSM 11121 / KW20 / Rd).